Here is a 454-residue protein sequence, read N- to C-terminus: Cholesterol 7-desaturase nvd (454 aa).

The next 2 membrane-spanning stretches (helical) occupy residues 13–33 (VLCPVGALLLCWVGSVLLGAG) and 47–67 (TTLSRTPWLVVLVPLLVLWGW). Residues 117–221 (WYRALDSHLL…SCELNGMVFV (105 aa)) form the Rieske domain. Residues Cys158, His160, Cys178, and His181 each coordinate [2Fe-2S] cluster.

This sequence belongs to the cholesterol 7-desaturase family. [2Fe-2S] cluster serves as cofactor.

The protein localises to the membrane. It carries out the reaction cholesterol + NADPH + O2 + H(+) = 7-dehydrocholesterol + NADP(+) + 2 H2O. The catalysed reaction is cholesterol + NADH + O2 + H(+) = 7-dehydrocholesterol + NAD(+) + 2 H2O. It functions in the pathway steroid hormone biosynthesis; dafachronic acid biosynthesis. Its function is as follows. Catalyzes the production of 7-dehydrocholesterol (7-DHC or cholesta-5,7-dien-3beta-ol) by inserting a double bond (desaturating) at the C7-C8 single bond of cholesterol. This reaction is the first step in the synthesis of the steroid hormone Delta(7)-dafachronic acid. The chain is Cholesterol 7-desaturase nvd (nvd) from Xenopus laevis (African clawed frog).